Consider the following 328-residue polypeptide: Lateral signaling target 1 protein (328 aa).

Disordered stretches follow at residues 56–78, 108–135, and 177–200; these read SSQDSGVLSSLSSSPQQRSGLRS, PTHYNSRKTSGPPPLMRTPSSGFSSASS, and PVQPSTSTSRNNVSQISGSSRLNG. Residues 178–200 are compositionally biased toward polar residues; sequence VQPSTSTSRNNVSQISGSSRLNG.

Interacts with fbf-2; the interaction probably mediates the release of the C-terminal tail of fbf-2 from the RNA-binding domain, thereby altering its RNA-binding affinity.

In terms of biological role, plays a role in germline stem cell maintenance, perhaps acting in concert with mRNA-binding factor fbf-2. May regulate fbf-2 by modulating RNA-binding and perhaps by competition with the intramolecular interaction between the fbf-2 RNA-binding domain and C-terminal tail. This chain is Lateral signaling target 1 protein, found in Caenorhabditis elegans.